Reading from the N-terminus, the 453-residue chain is tRNA modification GTPase MnmE (453 aa).

Positions 22, 79, and 119 each coordinate (6S)-5-formyl-5,6,7,8-tetrahydrofolate. The TrmE-type G domain maps to 215–376 (GMKVVIAGRP…LRNHLKECMG (162 aa)). Asparagine 225 contacts K(+). Residues 225–230 (NAGKSS), 244–250 (TDIAGTT), 269–272 (DTAG), and 334–337 (NKAD) each bind GTP. Serine 229 serves as a coordination point for Mg(2+). K(+)-binding residues include threonine 244, isoleucine 246, and threonine 249. Threonine 250 is a binding site for Mg(2+). Lysine 453 contributes to the (6S)-5-formyl-5,6,7,8-tetrahydrofolate binding site.

It belongs to the TRAFAC class TrmE-Era-EngA-EngB-Septin-like GTPase superfamily. TrmE GTPase family. Homodimer. Heterotetramer of two MnmE and two MnmG subunits. The cofactor is K(+).

The protein resides in the cytoplasm. Exhibits a very high intrinsic GTPase hydrolysis rate. Involved in the addition of a carboxymethylaminomethyl (cmnm) group at the wobble position (U34) of certain tRNAs, forming tRNA-cmnm(5)s(2)U34. The protein is tRNA modification GTPase MnmE of Vibrio parahaemolyticus serotype O3:K6 (strain RIMD 2210633).